The primary structure comprises 427 residues: Probable transcription factor At5g28040 (427 aa).

Residues 1–81 form a disordered region; that stretch reads MASDQRDTDF…APATKSSSGT (81 aa). S14 bears the Phosphoserine mark. Over residues 22-32 the composition is skewed to gly residues; that stretch reads GGGGGGRGGGE. Acidic residues predominate over residues 33–62; it reads TESDEDVVIPEPNEAEDDDHDPDPDPEYED.

It belongs to the GeBP family.

This is Probable transcription factor At5g28040 from Arabidopsis thaliana (Mouse-ear cress).